We begin with the raw amino-acid sequence, 95 residues long: Enhancer of yellow 2 transcription factor (95 aa).

The protein belongs to the ENY2 family. Component of the nuclear pore complex (NPC)-associated AMEX complex (anchoring and mRNA export complex), composed of at least e(y)2 and xmas-2. Component of the SAGA transcription coactivator-HAT complexes, at least composed of Ada2b, e(y)2, Pcaf/Gcn5, Taf10 and Nipped-A/Trrap. Within the SAGA complex, e(y)2, Sgf11, and not/nonstop form an additional subcomplex of SAGA called the DUB module (deubiquitination module). Component of the THO complex, composed of at least e(y)2, HPR1, THO2, THOC5, THOC6 and THOC7. Interacts with e(y)1. Interacts with su(Hw) (via zinc fingers). Interacts with xmas-2; required for localization to the nuclear periphery. Interacts with the nuclear pore complex (NPC).

The protein localises to the nucleus. It is found in the nucleoplasm. It localises to the cytoplasm. In terms of biological role, involved in mRNA export coupled transcription activation by association with both the AMEX and the SAGA complexes. The SAGA complex is a multiprotein complex that activates transcription by remodeling chromatin and mediating histone acetylation and deubiquitination. Within the SAGA complex, participates in a subcomplex that specifically deubiquitinates histone H2B. The SAGA complex is recruited to specific gene promoters by activators, where it is required for transcription. Required for nuclear receptor-mediated transactivation. Involved in transcription elongation by recruiting the THO complex onto nascent mRNA. The AMEX complex functions in docking export-competent ribonucleoprotein particles (mRNPs) to the nuclear entrance of the nuclear pore complex (nuclear basket). AMEX participates in mRNA export and accurate chromatin positioning in the nucleus by tethering genes to the nuclear periphery. This Drosophila virilis (Fruit fly) protein is Enhancer of yellow 2 transcription factor.